Consider the following 158-residue polypeptide: Ribosome maturation factor RimP (158 aa).

It belongs to the RimP family.

It is found in the cytoplasm. Functionally, required for maturation of 30S ribosomal subunits. The polypeptide is Ribosome maturation factor RimP (Leuconostoc citreum (strain KM20)).